A 217-amino-acid polypeptide reads, in one-letter code: Octanoyltransferase (217 aa).

The 176-residue stretch at 32–207 (SESHDELWIV…TFSQLLGYQH (176 aa)) folds into the BPL/LPL catalytic domain. Substrate-binding positions include 71 to 78 (RGGQVTYH), 138 to 140 (SLG), and 151 to 153 (GLA). Residue Cys-169 is the Acyl-thioester intermediate of the active site.

This sequence belongs to the LipB family.

Its subcellular location is the cytoplasm. The catalysed reaction is octanoyl-[ACP] + L-lysyl-[protein] = N(6)-octanoyl-L-lysyl-[protein] + holo-[ACP] + H(+). Its pathway is protein modification; protein lipoylation via endogenous pathway; protein N(6)-(lipoyl)lysine from octanoyl-[acyl-carrier-protein]: step 1/2. Its function is as follows. Catalyzes the transfer of endogenously produced octanoic acid from octanoyl-acyl-carrier-protein onto the lipoyl domains of lipoate-dependent enzymes. Lipoyl-ACP can also act as a substrate although octanoyl-ACP is likely to be the physiological substrate. The protein is Octanoyltransferase of Shewanella baltica (strain OS223).